Here is a 165-residue protein sequence, read N- to C-terminus: HTH-type transcriptional regulator IscR (165 aa).

Residues 2–131 (RLTSKGRYAV…NNITLAELVN (130 aa)) form the HTH rrf2-type domain. Residues 28 to 51 (LADISERQGISLSYLEQLFSRLRK) constitute a DNA-binding region (H-T-H motif). Cys-92, Cys-98, and Cys-104 together coordinate [2Fe-2S] cluster.

[2Fe-2S] cluster serves as cofactor.

Its function is as follows. Regulates the transcription of several operons and genes involved in the biogenesis of Fe-S clusters and Fe-S-containing proteins. The sequence is that of HTH-type transcriptional regulator IscR from Erwinia tasmaniensis (strain DSM 17950 / CFBP 7177 / CIP 109463 / NCPPB 4357 / Et1/99).